Consider the following 488-residue polypeptide: Beta-xylosidase (488 aa).

E163 serves as the catalytic Proton donor. E275 acts as the Nucleophile in catalysis.

It belongs to the glycosyl hydrolase 39 family.

The catalysed reaction is Hydrolysis of (1-&gt;4)-beta-D-xylans, to remove successive D-xylose residues from the non-reducing termini.. Functionally, beta-xylosidase is an intracellular xylan-degrading enzyme. The protein is Beta-xylosidase (xynB) of Caldicellulosiruptor saccharolyticus (Caldocellum saccharolyticum).